Reading from the N-terminus, the 1257-residue chain is Period circadian protein homolog 2 (1257 aa).

Positions 1-60 (MNGYVDFSPSPTSPTKEPGAPQPTQAVLQEDVDMSSGSSGNENCSTGRDSQGSDCDDNGK) are disordered. The segment covering 35–53 (SSGSSGNENCSTGRDSQGS) has biased composition (polar residues). Residues 109-118 (LIRTLKELKV) carry the Nuclear export signal 1 motif. Positions 179–246 (ITSEYIVKNA…FHSYTTPYKL (68 aa)) constitute a PAS 1 domain. Positions 306–310 (LCCLL) match the LXXLL motif. Residues 319–385 (YEAPRIPPEK…MLAIHKKILQ (67 aa)) form the PAS 2 domain. Residues 393–436 (YSPIRFRTRNGEYITLDTSWSSFINPWSRKISFIIGRHKVRVGP) enclose the PAC domain. Residues 460-469 (LTEQIHRLLM) carry the Nuclear export signal 2 motif. 2 disordered regions span residues 471–565 (PVPH…GASL) and 617–638 (PSRKATVSPGLHSGEAARPSKV). The important for protein stability stretch occupies residues 478-482 (SGYGS). Residues 493 to 504 (MSQTSSSDSNGQ) show a composition bias toward polar residues. The interval 510–709 (RRSGIFKTSG…GAAGGLSQEK (200 aa)) is CSNK1E binding domain. 5 positions are modified to phosphoserine: Ser-525, Ser-528, Ser-531, Ser-538, and Ser-544. Phosphothreonine is present on Thr-554. Phosphoserine occurs at positions 659, 693, 697, 706, 758, and 763. The segment at 757–832 (RSRAQASDRG…SDTSQSSCPS (76 aa)) is disordered. Positions 778 to 794 (KKTGKNRKLKSKRVKTR) match the Nuclear localization signal motif. The span at 779 to 792 (KTGKNRKLKSKRVK) shows a compositional bias: basic residues. Residues 821–832 (SPSDTSQSSCPS) show a composition bias toward low complexity. Thr-858 carries the post-translational modification Phosphothreonine. Residues 882–1067 (EFAVQPLPFA…DLCSATGSAL (186 aa)) form an interaction with PPARG region. At Ser-939 the chain carries Phosphoserine. A Phosphothreonine modification is found at Thr-964. The residue at position 971 (Ser-971) is a Phosphoserine. The short motif at 983–990 (LQLNLLQL) is the Nuclear export signal 3 element. Positions 994–1044 (PEGSTGAAGTLGTTGTAASGLDCTSGTSRDRQPKAPPTCNEPSDTQNSDAI) are disordered. Low complexity predominate over residues 996 to 1014 (GSTGAAGTLGTTGTAASGL). A compositionally biased stretch (polar residues) spans 1033 to 1044 (NEPSDTQNSDAI). Positions 1051 to 1055 (LNLLL) match the LXXLL motif. Residues 1070–1092 (SGASATSDSLGSSSLGFGTSQSG) show a composition bias toward low complexity. Positions 1070 to 1115 (SGASATSDSLGSSSLGFGTSQSGAGSSDTSHTSKYFGSIDSSENNH) are disordered. The segment covering 1093 to 1111 (AGSSDTSHTSKYFGSIDSS) has biased composition (polar residues). The residue at position 1126 (Ser-1126) is a Phosphoserine. The interval 1157–1257 (SRDLQAVLKE…LTGPRIEAQT (101 aa)) is CRY binding domain. The tract at residues 1224 to 1257 (PYEEDSPSPGLCDTSEAKEEEGEQLTGPRIEAQT) is disordered.

Homodimer. Component of the circadian core oscillator, which includes the CRY proteins, CLOCK or NPAS2, BMAL1 or BMAL2, CSNK1D and/or CSNK1E, TIMELESS, and the PER proteins. Interacts with CLOCK-BMAL1 (off DNA). Interacts with BMAL2. Interacts directly with PER1 and PER3, and through a C-terminal domain, with CRY1 and CRY2. Interacts (via PAS 2 domain) with TIMELESS. Interacts with NFIL3. Different large complexes have been identified with different repressive functions. The core of PER complexes is composed of at least PER1, PER2, PER3, CRY1, CRY2, CSNK1D and/or CSNK1E. The large PER complex involved in the repression of transcriptional termination is composed of at least PER2, CDK9, DDX5, DHX9, NCBP1 and POLR2A (active). The large PER complex involved in the histone deacetylation is composed of at least HDAC1, PER2, SFPQ and SIN3A. The large PER complex involved in the histone methylation is composed of at least PER2, CBX3, TRIM28, SUV39H1 and/or SUV39H2; CBX3 mediates the formation of the complex. Interacts with SETX; the interaction inhibits termination of circadian target genes. Interacts with the nuclear receptors HNF4A, NR1D1, NR4A2, RORA, PPARA, PPARG and THRA; the interaction with at least PPARG is ligand dependent. Interacts with PML. Interacts (phosphorylated) with BTRC and FBXW11; the interactions trigger proteasomal degradation. Interacts with NONO and SFPQ. Interacts with CAVIN3. Interacts with MAGEL2. Interacts with MAP1LC3B. Interacts with HNF4A. Acetylated. Deacetylated by SIRT1, resulting in decreased protein stability. Deacetylated by SIRT6, preventing its degradation by the proteasome, resulting in increased protein stability. Post-translationally, phosphorylated by CSNK1E and CSNK1D. Phosphorylation results in PER2 protein degradation. May be dephosphorylated by PP1. In terms of processing, ubiquitinated, leading to its proteasomal degradation. Ubiquitination may be inhibited by CRY1. In terms of tissue distribution, in the brain, high expression in SCN during the subjective day. Constitutive expression in the cornu ammonis and in the dentate gyrus of the hippocampus. Also expressed in the piriform cortex and the glomeruli of the olfactory bulb, and at a lower extent in the cerebral cortex. Not expressed in the pars tuberalis and the Purkinje neurons. Also expressed in adipose tissue (white and brown), heart, kidney, bladder, lumbar spinal cord, skeletal muscle, spleen, lung, pancreas and liver with highest levels in skeletal muscle and liver and lowest levels in spleen.

It localises to the nucleus. It is found in the cytoplasm. The protein resides in the perinuclear region. Its function is as follows. Transcriptional repressor which forms a core component of the circadian clock. The circadian clock, an internal time-keeping system, regulates various physiological processes through the generation of approximately 24 hour circadian rhythms in gene expression, which are translated into rhythms in metabolism and behavior. It is derived from the Latin roots 'circa' (about) and 'diem' (day) and acts as an important regulator of a wide array of physiological functions including metabolism, sleep, body temperature, blood pressure, endocrine, immune, cardiovascular, and renal function. Consists of two major components: the central clock, residing in the suprachiasmatic nucleus (SCN) of the brain, and the peripheral clocks that are present in nearly every tissue and organ system. Both the central and peripheral clocks can be reset by environmental cues, also known as Zeitgebers (German for 'timegivers'). The predominant Zeitgeber for the central clock is light, which is sensed by retina and signals directly to the SCN. The central clock entrains the peripheral clocks through neuronal and hormonal signals, body temperature and feeding-related cues, aligning all clocks with the external light/dark cycle. Circadian rhythms allow an organism to achieve temporal homeostasis with its environment at the molecular level by regulating gene expression to create a peak of protein expression once every 24 hours to control when a particular physiological process is most active with respect to the solar day. Transcription and translation of core clock components (CLOCK, NPAS2, BMAL1, BMAL2, PER1, PER2, PER3, CRY1 and CRY2) plays a critical role in rhythm generation, whereas delays imposed by post-translational modifications (PTMs) are important for determining the period (tau) of the rhythms (tau refers to the period of a rhythm and is the length, in time, of one complete cycle). A diurnal rhythm is synchronized with the day/night cycle, while the ultradian and infradian rhythms have a period shorter and longer than 24 hours, respectively. Disruptions in the circadian rhythms contribute to the pathology of cardiovascular diseases, cancer, metabolic syndrome and aging. A transcription/translation feedback loop (TTFL) forms the core of the molecular circadian clock mechanism. Transcription factors, CLOCK or NPAS2 and BMAL1 or BMAL2, form the positive limb of the feedback loop, act in the form of a heterodimer and activate the transcription of core clock genes and clock-controlled genes (involved in key metabolic processes), harboring E-box elements (5'-CACGTG-3') within their promoters. The core clock genes: PER1/2/3 and CRY1/2 which are transcriptional repressors form the negative limb of the feedback loop and interact with the CLOCK|NPAS2-BMAL1|BMAL2 heterodimer inhibiting its activity and thereby negatively regulating their own expression. This heterodimer also activates nuclear receptors NR1D1/2 and RORA/B/G, which form a second feedback loop and which activate and repress BMAL1 transcription, respectively. PER1 and PER2 proteins transport CRY1 and CRY2 into the nucleus with appropriate circadian timing, but also contribute directly to repression of clock-controlled target genes through interaction with several classes of RNA-binding proteins, helicases and others transcriptional repressors. PER appears to regulate circadian control of transcription by at least three different modes. First, interacts directly with the CLOCK-BMAL1 at the tail end of the nascent transcript peak to recruit complexes containing the SIN3-HDAC that remodel chromatin to repress transcription. Second, brings H3K9 methyltransferases such as SUV39H1 and SUV39H2 to the E-box elements of the circadian target genes, like PER2 itself or PER1. The recruitment of each repressive modifier to the DNA seems to be very precisely temporally orchestrated by the large PER complex, the deacetylases acting before than the methyltransferases. Additionally, large PER complexes are also recruited to the target genes 3' termination site through interactions with RNA-binding proteins and helicases that may play a role in transcription termination to regulate transcription independently of CLOCK-BMAL1 interactions. Recruitment of large PER complexes to the elongating polymerase at PER and CRY termination sites inhibited SETX action, impeding RNA polymerase II release and thereby repressing transcriptional reinitiation. May propagate clock information to metabolic pathways via the interaction with nuclear receptors. Coactivator of PPARA and corepressor of NR1D1, binds rhythmically at the promoter of nuclear receptors target genes like BMAL1 or G6PC1. Directly and specifically represses PPARG proadipogenic activity by blocking PPARG recruitment to target promoters and thereby transcriptional activation. Required for fatty acid and lipid metabolism, is involved as well in the regulation of circulating insulin levels. Plays an important role in the maintenance of cardiovascular functions through the regulation of NO and vasodilatatory prostaglandins production in aortas. Controls circadian glutamate uptake in synaptic vesicles through the regulation of VGLUT1 expression. May also be involved in the regulation of inflammatory processes. Represses the CLOCK-BMAL1 induced transcription of BHLHE40/DEC1 and ATF4. Negatively regulates the formation of the TIMELESS-CRY1 complex by competing with TIMELESS for binding to CRY1. The sequence is that of Period circadian protein homolog 2 (Per2) from Mus musculus (Mouse).